Reading from the N-terminus, the 393-residue chain is Beta-ureidopropionase (393 aa).

Positions 72–344 constitute a CN hydrolase domain; that stretch reads VRVGLVQNRI…DGLLVTELNL (273 aa). Glu-119 serves as the catalytic Proton acceptor. The active-site Proton donor is Lys-196. Cys-233 (nucleophile) is an active-site residue. Ser-378 bears the Phosphoserine mark.

It belongs to the carbon-nitrogen hydrolase superfamily. BUP family. Homodimer, homotetramer, homooctamer; can also form higher homooligomers.

It localises to the cytoplasm. The enzyme catalyses 3-(carbamoylamino)propanoate + H2O + 2 H(+) = beta-alanine + NH4(+) + CO2. The catalysed reaction is 3-(carbamoylamino)-2-methylpropanoate + H2O + 2 H(+) = (R)-3-amino-2-methylpropanoate + NH4(+) + CO2. The protein operates within amino-acid biosynthesis; beta-alanine biosynthesis. In terms of biological role, catalyzes a late step in pyrimidine degradation. Converts N-carbamoyl-beta-alanine (3-ureidopropanoate) into beta-alanine, ammonia and carbon dioxide. Likewise, converts N-carbamoyl-beta-aminoisobutyrate (3-ureidoisobutyrate) into beta-aminoisobutyrate, ammonia and carbon dioxide. This is Beta-ureidopropionase (Upb1) from Mus musculus (Mouse).